A 315-amino-acid chain; its full sequence is Serpentine receptor class delta-31 (315 aa).

The next 7 helical transmembrane spans lie at 6–26, 38–58, 83–103, 124–144, 174–194, 225–245, and 256–276; these read LHSILSLTAVLLNAFTMYLAI, AIITIKTATDILTSIMSFFVM, ACYVGHMLMLCFLEYNLIWMI, VFVAFCLSIPSIIHMVVWFSI, ITLITQLFITAFLVIVAYIWI, FQVFLPSFIFLGVITFASMFT, and AISVIFMFSPIISPFSYILFV.

This sequence belongs to the nematode receptor-like protein srd family.

The protein resides in the membrane. This is Serpentine receptor class delta-31 (srd-31) from Caenorhabditis elegans.